We begin with the raw amino-acid sequence, 715 residues long: MNPIVKQFKYGQHTVTLETGAIARQATAAVMASMDDTTVFVTVVAKKEVKEGQDFFPLTVDYQERTYAAGRIPGGFFKREGRPSEGETLIARLIDRPVRPLFPEGFFNEIQVIATVVSVNPQISPDLVAMIGASAALSLSGVPFNGPIGAARVGFINDQFVLNPTTSEQKISRLDLVVAGTDKAVLMVESEADILSEEQMLSAVVFGHQQQQVVIENIKEFVKEAGKPRWDWVAPEPNTALINQVKALAEARIGDAYRITEKQARYEQIDAIKADVIAQLTTQDETISEGAIIDIITALESSIVRGRIIAGEPRIDGRTVDTVRALDICTGVLPRTHGSAIFTRGETQALAVATLGTERDAQIIDELTGEKSDRFLFHYNFPPYSVGETGRIGSPKRREIGHGRLAKRGVLAVMPTAEEFPYVVRVVSEITESNGSSSMASVCGASLALMDAGVPIKAAVAGIAMGLVKEEEKFVVLSDILGDEDHLGDMDFKVAGTREGVTALQMDIKIEGITPEIMQIALNQAKGARMHILSVMEQAIPAPRADISDFAPRIHTMKIDPKKIKDVIGKGGAVIRALTEETGTSIDIDDDGTVKIAATDNNAAKAVMARIEDIVAEVEVNAIYKGKVTRVVDFGAFVSILGGKEGLVHISQITNERVERVADYLSVGQEVTVKVVEIDRQNRIRLTMKDLNNDTPVAENVTEEAEVSSEQQAEI.

Residues D485 and D491 each coordinate Mg(2+). Residues P552–I611 form the KH domain. An S1 motif domain is found at N621–K689. Residues T695–I715 are disordered.

The protein belongs to the polyribonucleotide nucleotidyltransferase family. In terms of assembly, component of the RNA degradosome, which is a multiprotein complex involved in RNA processing and mRNA degradation. Mg(2+) serves as cofactor.

The protein resides in the cytoplasm. The catalysed reaction is RNA(n+1) + phosphate = RNA(n) + a ribonucleoside 5'-diphosphate. Functionally, involved in mRNA degradation. Catalyzes the phosphorolysis of single-stranded polyribonucleotides processively in the 3'- to 5'-direction. In Actinobacillus pleuropneumoniae serotype 3 (strain JL03), this protein is Polyribonucleotide nucleotidyltransferase.